The following is a 239-amino-acid chain: Ribonuclease 3 (239 aa).

An RNase III domain is found at 18–141 (YTTLEKALGY…LMAGVYLEAG (124 aa)). Glu54 provides a ligand contact to Mg(2+). The active site involves Asp58. 2 residues coordinate Mg(2+): Ser127 and Glu130. The active site involves Glu130. Residues 168-237 (DYKTALQELT…AYYALQKLKE (70 aa)) form the DRBM domain.

It belongs to the ribonuclease III family. As to quaternary structure, homodimer. Mg(2+) serves as cofactor.

The protein resides in the cytoplasm. It catalyses the reaction Endonucleolytic cleavage to 5'-phosphomonoester.. Functionally, digests double-stranded RNA. Involved in the processing of primary rRNA transcript to yield the immediate precursors to the large and small rRNAs (23S and 16S). Processes some mRNAs, and tRNAs when they are encoded in the rRNA operon. Processes pre-crRNA and tracrRNA of type II CRISPR loci if present in the organism. The protein is Ribonuclease 3 of Helicobacter pylori (strain G27).